Here is a 310-residue protein sequence, read N- to C-terminus: Nitric oxide synthase-interacting protein homolog (310 aa).

Residues 115 to 124 (FSAIESTPSR) show a composition bias toward polar residues. The disordered stretch occupies residues 115 to 141 (FSAIESTPSRTGAVATPRPEVGSLKRQ).

This sequence belongs to the NOSIP family.

The protein localises to the cytoplasm. It localises to the nucleus. Negatively regulates nitric oxide production by inducing nitric oxide synthase translocation to actin cytoskeleton and inhibiting its enzymatic activity. This is Nitric oxide synthase-interacting protein homolog from Caenorhabditis elegans.